The sequence spans 150 residues: SKP1-like protein 17 (150 aa).

The interaction with the F-box domain of F-box proteins stretch occupies residues Leu-92–Asn-150.

The protein belongs to the SKP1 family. As to quaternary structure, part of a SCF (SKP1-cullin-F-box) protein ligase complex. Interacts with CPR1/CPR30. As to expression, mainly detected in the siliques.

The protein resides in the nucleus. Its pathway is protein modification; protein ubiquitination. Its function is as follows. Involved in ubiquitination and subsequent proteasomal degradation of target proteins. Together with CUL1, RBX1 and a F-box protein, it forms a SCF E3 ubiquitin ligase complex. The functional specificity of this complex depends on the type of F-box protein. In the SCF complex, it serves as an adapter that links the F-box protein to CUL1. Probably implicated in incompatibility response after hybridization. In Arabidopsis thaliana (Mouse-ear cress), this protein is SKP1-like protein 17 (ASK17).